Reading from the N-terminus, the 98-residue chain is Large ribosomal subunit protein uL23 (98 aa).

It belongs to the universal ribosomal protein uL23 family. Part of the 50S ribosomal subunit. Contacts protein L29, and trigger factor when it is bound to the ribosome.

Its function is as follows. One of the early assembly proteins it binds 23S rRNA. One of the proteins that surrounds the polypeptide exit tunnel on the outside of the ribosome. Forms the main docking site for trigger factor binding to the ribosome. This Nitrobacter hamburgensis (strain DSM 10229 / NCIMB 13809 / X14) protein is Large ribosomal subunit protein uL23.